The following is a 595-amino-acid chain: MQIIEIREPEQTDFKQKQQIAVGIDFGTTNSLIAIATDRKVKVIKSIDDKEITPTTIDFTSNNFTIGNNKGLRSIKRLFGKTLKEILNTPALFSLVKDYLDVNSNELKLNFANRRIRICEIAAEVFIYLKNQAEEQLKTHITKAVITVPAHFNDAARGEVMLAAKIAGFEVLRLIAEPTAAAYAYGLNNNQKGCYLVYDLGGGTFDVSILNIQEGIFQVIATSGDNMLGGDDIDVVITQYLCNKFDLPNSIDTLQLAKKAKETLTYKDSFNNDNISINRQILEQLILPLVEYTINIAQECLAQAGNPNIDGVILVGGVTRIPLIKDELYKAFKVDILSDIDPDKAVVWGAALQADNLIAPHTNSLLIDVVPLSLGMELYGGIVEKIIMRNTPIPIAVVKEFTTYADNQTGIQFHILQGEREMAVDCRSLARFELKGLPPMKAGNIRAEVTFAIDADGILSVSAYEKISNTSHTIEVKPNHGIDNTEIDIMLENAYKNAQIDYTTRLLQEAIIEAEALISSIEGAMAELTTLLSESEISVINSLLDNIKAAAKARDRILINNSIKEFKSKINKSMDTNLNIIINGVLKGKNINQIQ.

The protein belongs to the heat shock protein 70 family.

Functionally, chaperone involved in the maturation of iron-sulfur cluster-containing proteins. Has a low intrinsic ATPase activity which is markedly stimulated by HscB. The polypeptide is Chaperone protein HscA homolog (Rickettsia akari (strain Hartford)).